Here is a 303-residue protein sequence, read N- to C-terminus: tRNA pseudouridine synthase B (303 aa).

The active-site Nucleophile is aspartate 38.

Belongs to the pseudouridine synthase TruB family. Type 1 subfamily.

The catalysed reaction is uridine(55) in tRNA = pseudouridine(55) in tRNA. In terms of biological role, responsible for synthesis of pseudouridine from uracil-55 in the psi GC loop of transfer RNAs. In Oceanobacillus iheyensis (strain DSM 14371 / CIP 107618 / JCM 11309 / KCTC 3954 / HTE831), this protein is tRNA pseudouridine synthase B.